The primary structure comprises 153 residues: Acylphosphatase-like protein MJ0553 (153 aa).

The region spanning 4 to 102 is the Acylphosphatase-like domain; that stretch reads TYELIIYGRV…SRLSSDDILE (99 aa).

This chain is Acylphosphatase-like protein MJ0553, found in Methanocaldococcus jannaschii (strain ATCC 43067 / DSM 2661 / JAL-1 / JCM 10045 / NBRC 100440) (Methanococcus jannaschii).